Reading from the N-terminus, the 553-residue chain is MSDIALSISMLSLVAVLGLWLGNWRVYGVGLGIGGVLFGGIIVGHFAGLSGLALDEQTLHFIQEFGLILFVYTIGIQVGPGFFSSLRSSGLKLNGFAALLVLLGCAVAAALHQLFDVPLPVILGVFSGAVTNTPSLGAGQQILAELGAAPGSTGLMGMGYAVAYPFGICGILLTMWLIRMFFRIKIDEEAAQFEQQAGKTKESLQTINIAVRNPNIHGLMLSEIPSLDEADVICSRLKRGDELMVPRPDSRIELGDLLHLVGERHALRKVLLVLGEEVETSLSTRGTDLRVERVVVTNEQVLGKKIRDLDIKQKYDVVISRLNRAGIELVPTSQTSLQFGDILNLVGRLDAIEAVTNVVGNVQQKLQQVQMLPVFIGIGLGVLLGSIPFYLPGFPAALKLGLAGGPLVVALILSRIGSIGKLYWFMPPSANLALREIGIVLFLAVVGFKSGAGFIDTLINGDGPAWMMYGVAITLIPLLVVGVLARLYGKMNYLTLCGLLAGSMTDPPALAFANGMHPTSGASALSYATVYPLVMFLRIISPQLLAILLWAGA.

A run of 5 helical transmembrane segments spans residues 4–24, 29–49, 65–85, 95–115, and 158–178; these read IALS…LGNW, VGLG…FAGL, FGLI…FFSS, GFAA…HQLF, and MGYA…MWLI. 2 consecutive RCK C-terminal domains span residues 191-276 and 279-361; these read AQFE…VLGE and ETSL…VVGN. The next 6 membrane-spanning stretches (helical) occupy residues 371-391, 403-425, 439-459, 465-485, 493-513, and 533-553; these read MLPV…PFYL, AGGP…LYWF, IVLF…DTLI, AWMM…GVLA, YLTL…LAFA, and LVMF…WAGA.

This sequence belongs to the AAE transporter (TC 2.A.81) family. YidE subfamily.

Its subcellular location is the cell membrane. The chain is Putative transport protein AHA_3492 from Aeromonas hydrophila subsp. hydrophila (strain ATCC 7966 / DSM 30187 / BCRC 13018 / CCUG 14551 / JCM 1027 / KCTC 2358 / NCIMB 9240 / NCTC 8049).